The following is a 209-amino-acid chain: Small ribosomal subunit protein uS5 (209 aa).

The 64-residue stretch at 48–111 (LEDEVLDINM…DAAKLNITYI (64 aa)) folds into the S5 DRBM domain.

This sequence belongs to the universal ribosomal protein uS5 family. In terms of assembly, part of the 30S ribosomal subunit. Contacts protein S4.

Functionally, with S4 and S12 plays an important role in translational accuracy. This chain is Small ribosomal subunit protein uS5, found in Methanosarcina mazei (strain ATCC BAA-159 / DSM 3647 / Goe1 / Go1 / JCM 11833 / OCM 88) (Methanosarcina frisia).